The sequence spans 415 residues: 3-isopropylmalate dehydratase large subunit (415 aa).

Residues Cys297, Cys355, and Cys358 each coordinate [4Fe-4S] cluster.

It belongs to the aconitase/IPM isomerase family. LeuC type 2 subfamily. In terms of assembly, heterodimer of LeuC and LeuD. It depends on [4Fe-4S] cluster as a cofactor.

It catalyses the reaction (2R,3S)-3-isopropylmalate = (2S)-2-isopropylmalate. It participates in amino-acid biosynthesis; L-leucine biosynthesis; L-leucine from 3-methyl-2-oxobutanoate: step 2/4. Catalyzes the isomerization between 2-isopropylmalate and 3-isopropylmalate, via the formation of 2-isopropylmaleate. The protein is 3-isopropylmalate dehydratase large subunit of Sulfurisphaera tokodaii (strain DSM 16993 / JCM 10545 / NBRC 100140 / 7) (Sulfolobus tokodaii).